A 774-amino-acid polypeptide reads, in one-letter code: Polyribonucleotide nucleotidyltransferase (774 aa).

Mg(2+)-binding residues include Asp485 and Asp491. The KH domain maps to 552–611; that stretch reads PRIETMSVPKDKIRDIIGTGGKIIREIVATTGAKVDIDDDGTVKISSSDTAQIEAARNWI. An S1 motif domain is found at 621–689; sequence GKIYTGKVVN…NRGKVRLSMR (69 aa). Positions 689 to 774 are disordered; that stretch reads RVVDQETGEE…APAFLTRDDD (86 aa). The span at 700-755 shows a compositional bias: basic and acidic residues; that stretch reads PDTRPPREERPRGDRGDRGDRGPRRDGDRRREGGDRGPRRDRGDRGDRPRRERSEG.

It belongs to the polyribonucleotide nucleotidyltransferase family. It depends on Mg(2+) as a cofactor.

The protein localises to the cytoplasm. The enzyme catalyses RNA(n+1) + phosphate = RNA(n) + a ribonucleoside 5'-diphosphate. Involved in mRNA degradation. Catalyzes the phosphorolysis of single-stranded polyribonucleotides processively in the 3'- to 5'-direction. In Rhizorhabdus wittichii (strain DSM 6014 / CCUG 31198 / JCM 15750 / NBRC 105917 / EY 4224 / RW1) (Sphingomonas wittichii), this protein is Polyribonucleotide nucleotidyltransferase.